A 496-amino-acid polypeptide reads, in one-letter code: Genome polyprotein (496 aa).

Topologically, residues 1–447 (SRCTHLENRD…HTVLGGAFNS (447 aa)) are extracellular. 6 disulfide bridges follow: Cys3-Cys30, Cys60-Cys116, Cys60-Cys121, Cys74-Cys105, Cys92-Cys116, and Cys92-Cys121. A fusion peptide region spans residues 98–111 (DRGWGNHCGLFGKG). Asn154 carries N-linked (GlcNAc...) asparagine; by host glycosylation. 2 disulfide bridges follow: Cys186-Cys290 and Cys307-Cys338. Residues 448–468 (IFGGVGFLPKLLMGVALAWLG) form a helical membrane-spanning segment. Over 469-479 (LNTRNPTMSMS) the chain is Cytoplasmic. A helical membrane pass occupies residues 480-496 (FLMAGGLVLAMTLGVGA).

In terms of assembly, homodimer; in the endoplasmic reticulum and Golgi. Post-translationally, N-glycosylated.

Its subcellular location is the virion membrane. It is found in the host endoplasmic reticulum membrane. Its function is as follows. Binds to host cell surface receptor and mediates fusion between viral and cellular membranes. Envelope protein is synthesized in the endoplasmic reticulum in the form of heterodimer with protein prM. They play a role in virion budding in the ER, and the newly formed immature particle is covered with 60 spikes composed of heterodimer between precursor prM and envelope protein E. The virion is transported to the Golgi apparatus where the low pH causes dissociation of PrM-E heterodimers and formation of E homodimers. prM-E cleavage is ineficient, and many virions are only partially matured. These uncleaved prM would play a role in immune evasion. The polypeptide is Genome polyprotein (Bos taurus (Bovine)).